The following is a 285-amino-acid chain: Ribosomal protein L11 methyltransferase (285 aa).

The S-adenosyl-L-methionine site is built by threonine 131, glycine 154, aspartate 176, and asparagine 223.

Belongs to the methyltransferase superfamily. PrmA family.

The protein resides in the cytoplasm. The enzyme catalyses L-lysyl-[protein] + 3 S-adenosyl-L-methionine = N(6),N(6),N(6)-trimethyl-L-lysyl-[protein] + 3 S-adenosyl-L-homocysteine + 3 H(+). Functionally, methylates ribosomal protein L11. In Brucella abortus (strain S19), this protein is Ribosomal protein L11 methyltransferase.